Consider the following 458-residue polypeptide: Chondroitin hydrolase (458 aa).

The first 22 residues, methionine 1–glycine 22, serve as a signal peptide directing secretion. The EGF-like domain maps to asparagine 358–glutamate 401. 3 cysteine pairs are disulfide-bonded: cysteine 362–cysteine 373, cysteine 367–cysteine 389, and cysteine 391–cysteine 400.

The protein belongs to the glycosyl hydrolase 56 family.

Its function is as follows. Endo-beta-galactosaminidase that specifically hydrolyzes chondroitin, releasing GlcUA-beta-(1-&gt;3)-GalNAc-beta-(1-&gt;4)-GlcUA-beta-(1-&gt;3)-GalNAc as the main product. Also hydrolyzes to a lesser extent chondroitin sulfates (CS-A, CS-C) and hyaluronic acid. May regulate the function of chondroitin in cell division. The protein is Chondroitin hydrolase of Caenorhabditis elegans.